The sequence spans 453 residues: Dibenzothiophene-sulfone monooxygenase (453 aa).

Positions 59, 106, 156, 160, and 231 each coordinate FMN.

This sequence belongs to the NtaA/SnaA/DszA monooxygenase family. As to quaternary structure, homodimer.

It localises to the cytoplasm. It catalyses the reaction dibenzothiophene 5,5-dioxide + FMNH2 + NADH + O2 = 2'-hydroxybiphenyl-2-sulfinate + FMN + NAD(+) + H2O + H(+). The protein operates within sulfur metabolism; dibenzothiophene degradation. In terms of biological role, catalyzes the second step of the '4S' desulfurization pathway that removes covalently bound sulfur from dibenzothiophene (DBT) without breaking carbon-carbon bonds. Metabolizes DBT-sulfone (DBTO2 or DBT 5,5-dioxide) to 2-(2'-hydroxyphenyl)benzene sulphinate (HBPS). The polypeptide is Dibenzothiophene-sulfone monooxygenase (Rhodococcus erythropolis (strain XP)).